The chain runs to 182 residues: Adenylate kinase (182 aa).

Residue 12-17 coordinates ATP; the sequence is GAGKGT. The tract at residues 32-61 is NMP; sequence STGDLLRDEVSSGSVLGIKAAEIMNKGELV. AMP contacts are provided by residues Thr-33, Arg-38, 59-61, 85-88, and Gln-92; these read ELV and GFPR. The tract at residues 126–132 is LID; the sequence is ERGRQDD. Residue Arg-127 coordinates ATP. Residues Arg-129 and Arg-140 each contribute to the AMP site. Ala-168 lines the ATP pocket.

Belongs to the adenylate kinase family. In terms of assembly, monomer.

The protein resides in the cytoplasm. It catalyses the reaction AMP + ATP = 2 ADP. Its pathway is purine metabolism; AMP biosynthesis via salvage pathway; AMP from ADP: step 1/1. Catalyzes the reversible transfer of the terminal phosphate group between ATP and AMP. Plays an important role in cellular energy homeostasis and in adenine nucleotide metabolism. In Prochlorococcus marinus (strain NATL2A), this protein is Adenylate kinase.